A 359-amino-acid polypeptide reads, in one-letter code: Peptide chain release factor 1 (359 aa).

N5-methylglutamine is present on Gln235. Positions 287 to 312 (AQEASAMRSAQVGSGDRSERIRTYNF) are disordered.

Belongs to the prokaryotic/mitochondrial release factor family. Methylated by PrmC. Methylation increases the termination efficiency of RF1.

It is found in the cytoplasm. Peptide chain release factor 1 directs the termination of translation in response to the peptide chain termination codons UAG and UAA. This chain is Peptide chain release factor 1, found in Chlamydia trachomatis serovar A (strain ATCC VR-571B / DSM 19440 / HAR-13).